The sequence spans 432 residues: MVRNVVVIGTQWGDEGKGKIVDWLTDRAAGVIRFQGGHNAGHTLVVNGEKTVLHLIPSGILRKDVICYIGNGVVLSPGALLDEMSMLEQAGVDVSGRLRISEACPLILPYHIAVDGARELAKGPEKIGTTGRGIGPAYEDKIARRAIRLQDLFYPERFASKLKEVLDYHNFLLKNYYHTATVDYDQILDECLKKAERIQPMVADVPKLLFEANKAGNNLLFEGAQGALLDIDHGTYPFVTSSNCIAGAASVGSGVGPQLLGYVLGITKAYTTRVGSGPFPTELADTTGEYLAQRGNEFGSTTGRPRRCGWFDAVATRRSIQINGVSGLCITKLDVLDGLEKLKICTGYKSKQSDRLYDALPFGADDLADIEPVYEELPGWQACTAGIKDFDQLPKTAQNYLKRIEEVCQTPISMISTGPDRIETIVFHHPFG.

GTP contacts are provided by residues 13–19 (GDEGKGK) and 41–43 (GHT). Catalysis depends on Asp14, which acts as the Proton acceptor. Residues Asp14 and Gly41 each contribute to the Mg(2+) site. IMP-binding positions include 14–17 (DEGK), 39–42 (NAGH), Thr130, Arg144, Gln225, Thr240, and Arg304. His42 (proton donor) is an active-site residue. 300 to 306 (STTGRPR) serves as a coordination point for substrate. Residues Arg306, 332–334 (KLD), and 416–418 (STG) each bind GTP.

The protein belongs to the adenylosuccinate synthetase family. In terms of assembly, homodimer. It depends on Mg(2+) as a cofactor.

It is found in the cytoplasm. It carries out the reaction IMP + L-aspartate + GTP = N(6)-(1,2-dicarboxyethyl)-AMP + GDP + phosphate + 2 H(+). Its pathway is purine metabolism; AMP biosynthesis via de novo pathway; AMP from IMP: step 1/2. Its function is as follows. Plays an important role in the de novo pathway of purine nucleotide biosynthesis. Catalyzes the first committed step in the biosynthesis of AMP from IMP. The chain is Adenylosuccinate synthetase from Nitrosomonas eutropha (strain DSM 101675 / C91 / Nm57).